The primary structure comprises 169 residues: Lipoprotein signal peptidase (169 aa).

A run of 4 helical transmembrane segments spans residues Leu-10 to Phe-30, Val-41 to Phe-61, Trp-68 to Leu-88, and Gly-94 to Tyr-114. Catalysis depends on residues Asp-124 and Asp-143. A helical transmembrane segment spans residues Tyr-135 to Leu-155.

Belongs to the peptidase A8 family.

It is found in the cell inner membrane. It carries out the reaction Release of signal peptides from bacterial membrane prolipoproteins. Hydrolyzes -Xaa-Yaa-Zaa-|-(S,diacylglyceryl)Cys-, in which Xaa is hydrophobic (preferably Leu), and Yaa (Ala or Ser) and Zaa (Gly or Ala) have small, neutral side chains.. Its pathway is protein modification; lipoprotein biosynthesis (signal peptide cleavage). Functionally, this protein specifically catalyzes the removal of signal peptides from prolipoproteins. The protein is Lipoprotein signal peptidase of Pseudomonas paraeruginosa (strain DSM 24068 / PA7) (Pseudomonas aeruginosa (strain PA7)).